A 377-amino-acid chain; its full sequence is Glutamate 5-kinase (377 aa).

Lysine 15 is an ATP binding site. Substrate contacts are provided by serine 56, aspartate 143, and asparagine 155. 175–176 contributes to the ATP binding site; it reads SD. The PUA domain maps to 281–358; that stretch reads KGTLTIDAGA…PDVLIILGIS (78 aa).

Belongs to the glutamate 5-kinase family.

The protein localises to the cytoplasm. The catalysed reaction is L-glutamate + ATP = L-glutamyl 5-phosphate + ADP. It participates in amino-acid biosynthesis; L-proline biosynthesis; L-glutamate 5-semialdehyde from L-glutamate: step 1/2. Its function is as follows. Catalyzes the transfer of a phosphate group to glutamate to form L-glutamate 5-phosphate. This is Glutamate 5-kinase from Rhodopseudomonas palustris (strain BisA53).